Reading from the N-terminus, the 154-residue chain is Myoglobin (154 aa).

The 147-residue stretch at 2–148 (GLSDGEWQLV…FRKDIAAKYK (147 aa)) folds into the Globin domain. Position 4 is a phosphoserine (Ser-4). Position 65 (His-65) interacts with nitrite. Residue His-65 coordinates O2. Thr-68 carries the phosphothreonine modification. His-94 is a heme b binding site.

Belongs to the globin family. In terms of assembly, monomeric.

It localises to the cytoplasm. Its subcellular location is the sarcoplasm. The enzyme catalyses Fe(III)-heme b-[protein] + nitric oxide + H2O = Fe(II)-heme b-[protein] + nitrite + 2 H(+). The catalysed reaction is H2O2 + AH2 = A + 2 H2O. In terms of biological role, monomeric heme protein which primary function is to store oxygen and facilitate its diffusion within muscle tissues. Reversibly binds oxygen through a pentacoordinated heme iron and enables its timely and efficient release as needed during periods of heightened demand. Depending on the oxidative conditions of tissues and cells, and in addition to its ability to bind oxygen, it also has a nitrite reductase activity whereby it regulates the production of bioactive nitric oxide. Under stress conditions, like hypoxia and anoxia, it also protects cells against reactive oxygen species thanks to its pseudoperoxidase activity. The sequence is that of Myoglobin (MB) from Castor fiber (Eurasian beaver).